The following is a 510-amino-acid chain: Lysine-specific demethylase 4D (510 aa).

The JmjN domain occupies 15–57; sequence IMIFRPTKEEFNDFDKYIAYMESQGAHRAGLAKVIPPKEWRAR. Glu-23 and Glu-24 each carry polyADP-ribosyl glutamic acid. Tyr-133 serves as a coordination point for 2-oxoglutarate. One can recognise a JmjC domain in the interval 143 to 309; sequence DGKTQQWNVG…YGKVASQCSC (167 aa). Fe cation is bound by residues His-189 and Glu-191. 2-oxoglutarate is bound by residues Asn-199 and Lys-207. Zn(2+) contacts are provided by Cys-235 and His-241. 2-oxoglutarate is bound at residue Lys-242. Residue His-277 coordinates Fe cation. Residues Cys-307 and Cys-309 each coordinate Zn(2+). Residues 397–510 form a disordered region; it reads MCHTSRQAAD…ASEGGLTSDP (114 aa). Residues 461-471 show a composition bias toward basic and acidic residues; it reads RLPEGRDDRSP.

Belongs to the JHDM3 histone demethylase family. Requires Fe(2+) as cofactor. Ubiquitinated via 'Lys-63'-linked ubiquitin chains. Deubiquitinated by USP14 with the help of TRIM14 leading to stabilization.

Its subcellular location is the nucleus. It carries out the reaction N(6),N(6),N(6)-trimethyl-L-lysyl(9)-[histone H3] + 2 2-oxoglutarate + 2 O2 = N(6)-methyl-L-lysyl(9)-[histone H3] + 2 formaldehyde + 2 succinate + 2 CO2. Histone demethylase that specifically demethylates 'Lys-9' of histone H3, thereby playing a central role in histone code. Does not demethylate histone H3 'Lys-4', H3 'Lys-27', H3 'Lys-36' nor H4 'Lys-20'. Demethylates both di- and trimethylated H3 'Lys-9' residue, while it has no activity on monomethylated residues. Demethylation of Lys residue generates formaldehyde and succinate. The sequence is that of Lysine-specific demethylase 4D (Kdm4d) from Rattus norvegicus (Rat).